The chain runs to 347 residues: MNKELISEIPLLEDKAVSEIENAASLKDLEKVRLSYLGRKGVVKAYFDDLKNIDDAGEKRDLGAVINVLRNKIDQLITSKENELKDKEVKLKLQNEAVDITLPVRPERIGKIHPLSKVISEVKLIFAHMGFKAVDGPDIEDEFHVFDALNTPSHHPAREEQDTFYLRNKINDKRMVLRTHTSSVQIRTMEKTKTFPIKIVAAGRVYRNDFDATHTPMFHQIEGLYVNENVNMGQLKFTIHCFLSKFFGDKGLRIRFRNSFFPFTEPSAEVDISYKDSKWIEVLGCGMVHPNVFKNVGIDHTKYSGFAFGIGIERLAMLKYQISDLRSFYDNRVSWLNHYGFHFSSLR.

Position 265 (Glu265) interacts with Mg(2+).

Belongs to the class-II aminoacyl-tRNA synthetase family. Phe-tRNA synthetase alpha subunit type 1 subfamily. As to quaternary structure, tetramer of two alpha and two beta subunits. It depends on Mg(2+) as a cofactor.

The protein localises to the cytoplasm. It carries out the reaction tRNA(Phe) + L-phenylalanine + ATP = L-phenylalanyl-tRNA(Phe) + AMP + diphosphate + H(+). The sequence is that of Phenylalanine--tRNA ligase alpha subunit from Wolbachia pipientis subsp. Culex pipiens (strain wPip).